A 509-amino-acid polypeptide reads, in one-letter code: Transmembrane protein 102 (509 aa).

Over 1–312 (MASTVWGGAP…VLLATPEPPR (312 aa)) the chain is Extracellular. The tract at residues 167 to 236 (PPVPEESDMT…NPETPEPLET (70 aa)) is disordered. The span at 174 to 204 (DMTHQTHSKESPTDRENSVDPSHDYVPEPEP) shows a compositional bias: basic and acidic residues. A compositionally biased stretch (low complexity) spans 207-224 (SLQKSSSDLSESQSSYKD). A helical membrane pass occupies residues 313–329 (HLLLFDLIPVVTVTGWP). Topologically, residues 330 to 509 (DTARSHSWAG…GLAGVGGGTH (180 aa)) are cytoplasmic.

In terms of assembly, interacts with CSF2RB; this interaction occurs preferentially in the absence of CSF2.

It localises to the cell membrane. Selectively involved in CSF2 deprivation-induced apoptosis via a mitochondria-dependent pathway. The chain is Transmembrane protein 102 (Tmem102) from Mus musculus (Mouse).